Consider the following 360-residue polypeptide: Phospho-N-acetylmuramoyl-pentapeptide-transferase (360 aa).

A run of 10 helical transmembrane segments spans residues 26–46 (AILSVLTALGLSLWMGPIMIK), 70–90 (GTPTMGGIMILAAISITILLW), 94–114 (SNPYVWAVLTVLLGYGAIGFV), 132–152 (WKYFWQSLIAFVVAFALYAYG), 168–188 (IMPQLGLMYIILTYFVIVGTS), 199–219 (GLAIMPTVLVAAGFAVIAWAT), 236–256 (ASELVVVCTAIVGAGLGFLWF), 263–283 (VFMGDVGSLALGGALGTIAVL), 288–308 (LILVIMGGVFVMETLSVILQV), and 338–358 (VIVRFWIISMVLVLIGLATLK).

Belongs to the glycosyltransferase 4 family. MraY subfamily. Requires Mg(2+) as cofactor.

It is found in the cell inner membrane. It catalyses the reaction UDP-N-acetyl-alpha-D-muramoyl-L-alanyl-gamma-D-glutamyl-meso-2,6-diaminopimeloyl-D-alanyl-D-alanine + di-trans,octa-cis-undecaprenyl phosphate = di-trans,octa-cis-undecaprenyl diphospho-N-acetyl-alpha-D-muramoyl-L-alanyl-D-glutamyl-meso-2,6-diaminopimeloyl-D-alanyl-D-alanine + UMP. It functions in the pathway cell wall biogenesis; peptidoglycan biosynthesis. In terms of biological role, catalyzes the initial step of the lipid cycle reactions in the biosynthesis of the cell wall peptidoglycan: transfers peptidoglycan precursor phospho-MurNAc-pentapeptide from UDP-MurNAc-pentapeptide onto the lipid carrier undecaprenyl phosphate, yielding undecaprenyl-pyrophosphoryl-MurNAc-pentapeptide, known as lipid I. The sequence is that of Phospho-N-acetylmuramoyl-pentapeptide-transferase from Vibrio campbellii (strain ATCC BAA-1116).